We begin with the raw amino-acid sequence, 319 residues long: GCN5-related N-acetyltransferase 5, chloroplastic (319 aa).

The transit peptide at M1–S55 directs the protein to the chloroplast. Residues M109 to P297 form the N-acetyltransferase domain. Residues M218–V220, R226–W231, D258–A260, and Y265 each bind acetyl-CoA. Catalysis depends on Y265, which acts as the Proton donor.

This sequence belongs to the acetyltransferase family. GNAT subfamily. Oligomer. Autoacetylated. Expressed in green tissues.

Its subcellular location is the plastid. It is found in the chloroplast. It carries out the reaction an N-terminal L-alpha-aminoacyl-[protein] + acetyl-CoA = N-terminal N(alpha)-acetyl-L-alpha-aminoacyl-[protein] + CoA + H(+). It catalyses the reaction L-lysyl-[protein] + acetyl-CoA = N(6)-acetyl-L-lysyl-[protein] + CoA + H(+). The enzyme catalyses N-terminal L-alanyl-[protein] + acetyl-CoA = N-terminal N(alpha)-acetyl-L-alanyl-[protein] + CoA + H(+). The catalysed reaction is N-terminal L-seryl-[protein] + acetyl-CoA = N-terminal N(alpha)-acetyl-L-seryl-[protein] + CoA + H(+). It carries out the reaction N-terminal L-methionyl-[protein] + acetyl-CoA = N-terminal N(alpha)-acetyl-L-methionyl-[protein] + CoA + H(+). It catalyses the reaction N-terminal L-valyl-[protein] + acetyl-CoA = N-terminal N(alpha)-acetyl-L-valyl-[protein] + CoA + H(+). The enzyme catalyses N-terminal L-threonyl-[protein] + acetyl-CoA = N-terminal N(alpha)-acetyl-L-threonyl-[protein] + CoA + H(+). In terms of biological role, protein acetyltransferase with dual specificity triggering both N-alpha-acetylation (NTA), with a large spectrum of modified N-termini, including methionine, alanine, serine and to a lower extent threonine and valine as substrates, and epsilon-lysine acetylation (KA). The chain is GCN5-related N-acetyltransferase 5, chloroplastic from Arabidopsis thaliana (Mouse-ear cress).